A 387-amino-acid chain; its full sequence is Beta-alanyl-dopamine/carcinine hydrolase (387 aa).

The protein belongs to the peptidase C45 family. As to quaternary structure, the unprocessed protein forms homodimers. May form heterodimers composed of a 15 kDa alpha subunit and a 30 kDa beta subunit. In terms of processing, the protein is synthesized as a 43 kDa precursor which is then self-processed into a 15 kDa alpha subunit and a 30 kDa beta subunit. Processing appears to be necessary for beta-alanyl-dopamine/carcinine hydrolase activity. The beta subunit carries the beta-alanyl-dopamine/carcinine hydrolase activity. Expressed in body, head, optic lobes and retina (at protein level). Expressed in photoreceptor cells R1-R6 in the lamina and in photoreceptor cells R7 and R8 in the medulla (at protein level).

It is found in the cell projection. The protein localises to the axon. Its subcellular location is the cytoplasm. The enzyme catalyses carcinine + H2O = histamine + beta-alanine. The catalysed reaction is beta-alanyl-dopamine + H2O = dopamine + beta-alanine. Its function is as follows. In the cuticle, catalyzes the hydrolysis of beta-alanyl-dopamine releasing dopamine and beta-alanine; dopamine is a metabolite involved in the pigmentation and sclerotization of the insect cuticle. In the photoreceptor cells, catalyzes the hydrolysis of carcinine releasing histamine and beta-alanine contributing to the recycling of the neurotransmitter histamine in the optical nerve system. Also, regulates the cuticular hydrocarbon composition in females. This is Beta-alanyl-dopamine/carcinine hydrolase from Drosophila melanogaster (Fruit fly).